A 156-amino-acid chain; its full sequence is S-ribosylhomocysteine lyase (156 aa).

The Fe cation site is built by H56, H60, and C123.

It belongs to the LuxS family. Homodimer. The cofactor is Fe cation.

It catalyses the reaction S-(5-deoxy-D-ribos-5-yl)-L-homocysteine = (S)-4,5-dihydroxypentane-2,3-dione + L-homocysteine. Involved in the synthesis of autoinducer 2 (AI-2) which is secreted by bacteria and is used to communicate both the cell density and the metabolic potential of the environment. The regulation of gene expression in response to changes in cell density is called quorum sensing. Catalyzes the transformation of S-ribosylhomocysteine (RHC) to homocysteine (HC) and 4,5-dihydroxy-2,3-pentadione (DPD). The polypeptide is S-ribosylhomocysteine lyase (Staphylococcus aureus (strain Mu3 / ATCC 700698)).